We begin with the raw amino-acid sequence, 685 residues long: Translation factor GUF1 homolog, mitochondrial (685 aa).

The N-terminal 54 residues, 1 to 54 (MFSRLLNRGNGGVNKNITSGLLLRRTTTTTTRLSYINNSPTLSIRSFCSKSTTI), are a transit peptide targeting the mitochondrion. The 200-residue stretch at 68–267 (DRIRNFSIIA…AVIDRIPPPQ (200 aa)) folds into the tr-type G domain. GTP contacts are provided by residues 77-84 (AHIDHGKT), 160-164 (DTPGH), and 214-217 (NKID).

This sequence belongs to the TRAFAC class translation factor GTPase superfamily. Classic translation factor GTPase family. LepA subfamily.

It is found in the mitochondrion inner membrane. It catalyses the reaction GTP + H2O = GDP + phosphate + H(+). Promotes mitochondrial protein synthesis. May act as a fidelity factor of the translation reaction, by catalyzing a one-codon backward translocation of tRNAs on improperly translocated ribosomes. Binds to mitochondrial ribosomes in a GTP-dependent manner. In Dictyostelium discoideum (Social amoeba), this protein is Translation factor GUF1 homolog, mitochondrial (guf1).